Here is a 302-residue protein sequence, read N- to C-terminus: Sulfate adenylyltransferase subunit 2 (302 aa).

It belongs to the PAPS reductase family. CysD subfamily. In terms of assembly, heterodimer composed of CysD, the smaller subunit, and CysN.

The catalysed reaction is sulfate + ATP + H(+) = adenosine 5'-phosphosulfate + diphosphate. It participates in sulfur metabolism; hydrogen sulfide biosynthesis; sulfite from sulfate: step 1/3. With CysN forms the ATP sulfurylase (ATPS) that catalyzes the adenylation of sulfate producing adenosine 5'-phosphosulfate (APS) and diphosphate, the first enzymatic step in sulfur assimilation pathway. APS synthesis involves the formation of a high-energy phosphoric-sulfuric acid anhydride bond driven by GTP hydrolysis by CysN coupled to ATP hydrolysis by CysD. This is Sulfate adenylyltransferase subunit 2 from Baumannia cicadellinicola subsp. Homalodisca coagulata.